A 260-amino-acid polypeptide reads, in one-letter code: Imidazole glycerol phosphate synthase subunit HisF (260 aa).

Active-site residues include aspartate 12 and aspartate 131.

Belongs to the HisA/HisF family. As to quaternary structure, heterodimer of HisH and HisF.

The protein localises to the cytoplasm. It carries out the reaction 5-[(5-phospho-1-deoxy-D-ribulos-1-ylimino)methylamino]-1-(5-phospho-beta-D-ribosyl)imidazole-4-carboxamide + L-glutamine = D-erythro-1-(imidazol-4-yl)glycerol 3-phosphate + 5-amino-1-(5-phospho-beta-D-ribosyl)imidazole-4-carboxamide + L-glutamate + H(+). Its pathway is amino-acid biosynthesis; L-histidine biosynthesis; L-histidine from 5-phospho-alpha-D-ribose 1-diphosphate: step 5/9. In terms of biological role, IGPS catalyzes the conversion of PRFAR and glutamine to IGP, AICAR and glutamate. The HisF subunit catalyzes the cyclization activity that produces IGP and AICAR from PRFAR using the ammonia provided by the HisH subunit. The sequence is that of Imidazole glycerol phosphate synthase subunit HisF from Corynebacterium jeikeium (strain K411).